A 292-amino-acid chain; its full sequence is Alpha-soluble NSF attachment protein (292 aa).

It belongs to the SNAP family.

Its subcellular location is the cytoplasmic vesicle. The protein resides in the membrane. Required for vesicular transport between the endoplasmic reticulum and the Golgi apparatus. Also between the endosome and phagosome. The chain is Alpha-soluble NSF attachment protein from Drosophila melanogaster (Fruit fly).